Reading from the N-terminus, the 297-residue chain is ABSCISIC ACID-INSENSITIVE 5-like protein 2 (297 aa).

Phosphoserine occurs at positions 21, 43, and 81. 2 disordered regions span residues I100–L119 and I138–G157. T118 bears the Phosphothreonine mark. Residues P146–G157 show a composition bias toward gly residues. The region spanning V225–Q288 is the bZIP domain. Residues R227–K246 form a basic motif region. Positions L253–L267 are leucine-zipper. Residues E272–F297 are disordered.

This sequence belongs to the bZIP family. ABI5 subfamily. As to quaternary structure, DNA-binding heterodimer with ABI5/DPBF1, DPBF2 or EEL/DPBF4. Interacts with the AFP proteins AFP1, AFP2, AFP3 and AFP4. As to expression, predominantly expressed in seeds.

Its subcellular location is the nucleus. Functionally, binds to the embryo specification element and the ABA-responsive element (ABRE) of the Dc3 gene promoter. Could participate in abscisic acid-regulated gene expression during seed development. The polypeptide is ABSCISIC ACID-INSENSITIVE 5-like protein 2 (DPBF3) (Arabidopsis thaliana (Mouse-ear cress)).